The following is a 780-amino-acid chain: TSC22 domain family protein 2 (780 aa).

Disordered stretches follow at residues 20-86 (AQVA…TVSP), 126-158 (TSAPAPGAPGGPQLAGSSAGPVTAAPSQPPTTC), 235-499 (AHGP…PGGP), 587-607 (LVGQVDDTRRKSEPLPQPPLS), and 736-780 (LSSN…VSSA). The segment covering 28 to 37 (EDTESLDDPD) has biased composition (acidic residues). Positions 126–146 (TSAPAPGAPGGPQLAGSSAGP) are enriched in low complexity. The span at 241 to 262 (GTDSSLTAVSQLPPSEKMSQPT) shows a compositional bias: polar residues. Low complexity-rich tracts occupy residues 297 to 316 (GAATGPQPMMAAAQPSQPQG), 344 to 361 (PAVGAPAAQQPQQFAYPQ), and 395 to 412 (QPSSTGAAASPATAATLP). Positions 415–434 (TGQNASSVGAQLMGASSQPS) are enriched in polar residues. Positions 453 to 468 (QPTGVPPATVGGVVQP) are enriched in low complexity. Over residues 736-756 (LSSNDQLSQLPTQQANPGSTS) the composition is skewed to polar residues. Residues 765–774 (PPQPTQPPQQ) show a composition bias toward pro residues.

The protein belongs to the TSC-22/Dip/Bun family. In terms of assembly, interacts with NRBP1. Interacts with PKM isoform M2; the interaction results in reduced nuclear levels of PKM isoform M2, leading to repression of cyclin CCND1 transcription and reduced cell growth. Interacts with WDR77.

Functionally, reduces the level of nuclear PKM isoform M2 which results in repression of cyclin CCND1 transcription and reduced cell growth. In Homo sapiens (Human), this protein is TSC22 domain family protein 2.